A 120-amino-acid polypeptide reads, in one-letter code: MFLLHEYDIFWAFLMISSVIPILAFIISGVLAPISEGPEKLSSYESGIEPIGDAWIQFRIRYYMFALVFVVFDVETVFLYPWAVSFDVLGVSVFIEALIFVLIPVVGSVYAWRKGALEWS.

The next 3 membrane-spanning stretches (helical) occupy residues 9–29, 64–84, and 88–108; these read IFWAFLMISSVIPILAFIISG, MFALVFVVFDVETVFLYPWAV, and VLGVSVFIEALIFVLIPVVGS.

This sequence belongs to the complex I subunit 3 family. As to quaternary structure, NDH is composed of at least 16 different subunits, 5 of which are encoded in the nucleus.

It is found in the plastid. The protein localises to the chloroplast thylakoid membrane. It catalyses the reaction a plastoquinone + NADH + (n+1) H(+)(in) = a plastoquinol + NAD(+) + n H(+)(out). The catalysed reaction is a plastoquinone + NADPH + (n+1) H(+)(in) = a plastoquinol + NADP(+) + n H(+)(out). Functionally, NDH shuttles electrons from NAD(P)H:plastoquinone, via FMN and iron-sulfur (Fe-S) centers, to quinones in the photosynthetic chain and possibly in a chloroplast respiratory chain. The immediate electron acceptor for the enzyme in this species is believed to be plastoquinone. Couples the redox reaction to proton translocation, and thus conserves the redox energy in a proton gradient. The polypeptide is NAD(P)H-quinone oxidoreductase subunit 3, chloroplastic (Nuphar advena (Common spatterdock)).